Reading from the N-terminus, the 100-residue chain is Replication restart protein PriB (100 aa).

In terms of domain architecture, SSB spans 1–99 (MGFNNLVSLA…LRIQNIQEYK (99 aa)).

It belongs to the PriB family. In terms of assembly, homodimer. Interacts with PriA and DnaT. Component of the replication restart primosome. Primosome assembly occurs via a 'hand-off' mechanism. PriA binds to replication forks, subsequently PriB then DnaT bind; DnaT then displaces ssDNA to generate the helicase loading substrate.

In terms of biological role, involved in the restart of stalled replication forks, which reloads the replicative helicase on sites other than the origin of replication; the PriA-PriB pathway is the major replication restart pathway. During primosome assembly it facilitates complex formation between PriA and DnaT on DNA; stabilizes PriA on DNA. Stimulates the DNA unwinding activity of PriA helicase. This chain is Replication restart protein PriB, found in Neisseria meningitidis serogroup B (strain ATCC BAA-335 / MC58).